The sequence spans 32 residues: Cytochrome b6-f complex subunit 7 (32 aa).

A helical transmembrane segment spans residues 5 to 25 (IFTVAGVMWALVLTGLSVGFG).

The protein belongs to the PetM family. The 4 large subunits of the cytochrome b6-f complex are cytochrome b6, subunit IV (17 kDa polypeptide, PetD), cytochrome f and the Rieske protein, while the 4 small subunits are PetG, PetL, PetM and PetN. The complex functions as a dimer.

The protein localises to the plastid. Its subcellular location is the chloroplast thylakoid membrane. Its function is as follows. Component of the cytochrome b6-f complex, which mediates electron transfer between photosystem II (PSII) and photosystem I (PSI), cyclic electron flow around PSI, and state transitions. The chain is Cytochrome b6-f complex subunit 7 from Emiliania huxleyi (Coccolithophore).